Consider the following 163-residue polypeptide: Phosphopantetheine adenylyltransferase (163 aa).

A substrate-binding site is contributed by T10. ATP contacts are provided by residues 10–11 and H18; that span reads TF. Substrate-binding residues include K42, L75, and R89. ATP-binding positions include 90-92, E100, and 125-131; these read GVR and YTYVASS.

This sequence belongs to the bacterial CoaD family. In terms of assembly, homohexamer. Requires Mg(2+) as cofactor.

It is found in the cytoplasm. It carries out the reaction (R)-4'-phosphopantetheine + ATP + H(+) = 3'-dephospho-CoA + diphosphate. The protein operates within cofactor biosynthesis; coenzyme A biosynthesis; CoA from (R)-pantothenate: step 4/5. Functionally, reversibly transfers an adenylyl group from ATP to 4'-phosphopantetheine, yielding dephospho-CoA (dPCoA) and pyrophosphate. The chain is Phosphopantetheine adenylyltransferase from Pelodictyon phaeoclathratiforme (strain DSM 5477 / BU-1).